The primary structure comprises 252 residues: DNA repair protein RecO (252 aa).

Belongs to the RecO family.

Its function is as follows. Involved in DNA repair and RecF pathway recombination. In Rhodospirillum rubrum (strain ATCC 11170 / ATH 1.1.1 / DSM 467 / LMG 4362 / NCIMB 8255 / S1), this protein is DNA repair protein RecO.